The primary structure comprises 156 residues: Small ribosomal subunit protein uS7 (156 aa).

This sequence belongs to the universal ribosomal protein uS7 family. In terms of assembly, part of the 30S ribosomal subunit. Contacts proteins S9 and S11.

Its function is as follows. One of the primary rRNA binding proteins, it binds directly to 16S rRNA where it nucleates assembly of the head domain of the 30S subunit. Is located at the subunit interface close to the decoding center, probably blocks exit of the E-site tRNA. This chain is Small ribosomal subunit protein uS7, found in Rubrobacter xylanophilus (strain DSM 9941 / JCM 11954 / NBRC 16129 / PRD-1).